We begin with the raw amino-acid sequence, 206 residues long: Thymidylate kinase (206 aa).

16–23 (GIDGTGKS) contributes to the ATP binding site.

It belongs to the thymidylate kinase family.

It catalyses the reaction dTMP + ATP = dTDP + ADP. Its function is as follows. Phosphorylation of dTMP to form dTDP in both de novo and salvage pathways of dTTP synthesis. The chain is Thymidylate kinase from Akkermansia muciniphila (strain ATCC BAA-835 / DSM 22959 / JCM 33894 / BCRC 81048 / CCUG 64013 / CIP 107961 / Muc).